The primary structure comprises 267 residues: Small ribosomal subunit protein uS5 (267 aa).

A disordered region spans residues 1 to 37; the sequence is MADEAPARSGFRGGFGSRGGRGGRGRGRGRWARGRGK. The span at 11 to 20 shows a compositional bias: gly residues; sequence FRGGFGSRGG. Positions 21–34 are enriched in basic residues; the sequence is RGGRGRGRGRWARG. At Ser-60 the chain carries Phosphoserine. Residues 85–148 enclose the S5 DRBM domain; the sequence is LKDEVLKIMP…ILAKLSVVPV (64 aa).

Belongs to the universal ribosomal protein uS5 family.

Functionally, component of the ribosome, a large ribonucleoprotein complex responsible for the synthesis of proteins in the cell. The small ribosomal subunit (SSU) binds messenger RNAs (mRNAs) and translates the encoded message by selecting cognate aminoacyl-transfer RNA (tRNA) molecules. The large subunit (LSU) contains the ribosomal catalytic site termed the peptidyl transferase center (PTC), which catalyzes the formation of peptide bonds, thereby polymerizing the amino acids delivered by tRNAs into a polypeptide chain. The nascent polypeptides leave the ribosome through a tunnel in the LSU and interact with protein factors that function in enzymatic processing, targeting, and the membrane insertion of nascent chains at the exit of the ribosomal tunnel. Plays a role in the assembly and function of the 40S ribosomal subunit. Mutations in this protein affects the control of translational fidelity. Involved in nucleolar processing of pre-18S ribosomal RNA and ribosome assembly. Has a specific developmental role during oogenesis. The protein is Small ribosomal subunit protein uS5 (RpS2) of Drosophila melanogaster (Fruit fly).